A 623-amino-acid chain; its full sequence is Oviduct-specific glycoprotein (623 aa).

The first 21 residues, 1–21 (MWKLLLWVGLVLVLKHHDGAA), serve as a signal peptide directing secretion. The GH18 domain occupies 22–385 (HKLVCYFTNW…YVMNDILVRA (364 aa)). C26 and C51 form a disulfide bridge. Chitin-binding positions include 71–72 (LQ), 98–101 (GGWN), Y142, 211–214 (LSYD), and W355. N-linked (GlcNAc...) asparagine glycans are attached at residues N402 and N441. 2 disordered regions span residues 539–558 (LTPV…VSPG) and 594–623 (RKIS…PQDG). Residues 613–623 (TSETGTHPQDG) show a composition bias toward polar residues.

This sequence belongs to the glycosyl hydrolase 18 family. In terms of tissue distribution, oviduct.

It localises to the cytoplasmic vesicle. The protein localises to the secretory vesicle. Functionally, binds to oocyte zona pellucida in vivo. May play a role in the fertilization process and/or early embryonic development. The polypeptide is Oviduct-specific glycoprotein (OVGP1) (Papio anubis (Olive baboon)).